The chain runs to 207 residues: MVATCLQVVGFVTSFVGWIGVIVTTSTNDWVVTCGYTIPTCRKLDELGSKGLWADCVMATGLYHCKPLVDILILPGYVQACRALMIAASVLGLPAILLLLTVLPCIRMGHEPGVAKYRRAQLAGVLLILLALCAIVATIWFPVCAHRETTIVSFGYSLYAGWIGAVLCLVGGCVILCCAGDAQAFGENRFYYSSGSSSPTHAKSAHV.

Residue M1 is a topological domain, cytoplasmic. The chain crosses the membrane as a helical span at residues V2–I22. Over V23 to R82 the chain is Extracellular. The chain crosses the membrane as a helical span at residues A83–L103. At P104–L122 the chain is on the cytoplasmic side. A helical transmembrane segment spans residues A123–V143. Residues C144–S157 lie on the Extracellular side of the membrane. Residues L158–C178 form a helical membrane-spanning segment. The Cytoplasmic portion of the chain corresponds to A179 to V207. S193, S194, S197, and S198 each carry phosphoserine.

Belongs to the claudin family. Interacts with tetraspanin-3/TSPAN3. Interacts with OCLN.

Its subcellular location is the cell junction. It localises to the tight junction. The protein resides in the cell membrane. In terms of biological role, plays a major role in tight junction-specific obliteration of the intercellular space, through calcium-independent cell-adhesion activity. In Macaca fascicularis (Crab-eating macaque), this protein is Claudin-11 (CLDN11).